The chain runs to 415 residues: DNA double-strand break repair protein Mre11 (415 aa).

Asp10, His12, Asp51, and Asn86 together coordinate Mn(2+). His87 serves as the catalytic Proton donor. His174, His208, and His210 together coordinate Mn(2+).

This sequence belongs to the MRE11/RAD32 family. Homodimer. Forms a heterotetramer composed of two Mre11 subunits and two Rad50 subunits. Requires Mn(2+) as cofactor.

Its activity is regulated as follows. Nuclease activity is regulated by Rad50. Functionally, part of the Rad50/Mre11 complex, which is involved in the early steps of DNA double-strand break (DSB) repair. The complex may facilitate opening of the processed DNA ends to aid in the recruitment of HerA and NurA. Mre11 binds to DSB ends and has both double-stranded 3'-5' exonuclease activity and single-stranded endonuclease activity. The protein is DNA double-strand break repair protein Mre11 of Pyrococcus abyssi (strain GE5 / Orsay).